Here is a 391-residue protein sequence, read N- to C-terminus: Casein kinase II subunit alpha (391 aa).

An interaction with beta subunit region spans residues 36 to 41 (QDDYQL). The Protein kinase domain occupies 39–324 (YQLVRKLGRG…AREAMEHPYF (286 aa)). Residues 45-53 (LGRGKYSEV) and K68 contribute to the ATP site. The active-site Proton acceptor is D156. A phosphothreonine; by CDK1 mark is found at T344 and T360. Phosphoserine; by CDK1 occurs at positions 362 and 370.

Belongs to the protein kinase superfamily. Ser/Thr protein kinase family. CK2 subfamily. In terms of assembly, heterotetramer composed of two catalytic subunits (alpha chain and/or alpha' chain) and two regulatory subunits (beta chains). The tetramer can exist as a combination of 2 alpha/2 beta, 2 alpha'/2 beta or 1 alpha/1 alpha'/2 beta subunits. Also part of a CK2-SPT16-SSRP1 complex composed of SSRP1, SUPT16H, CSNK2A1, CSNK2A2 and CSNK2B, which forms following UV irradiation. Interacts with RNPS1. Interacts with SNAI1. Interacts with PML. Interacts with CCAR2. Interacts with HIRIP3. Post-translationally, phosphorylated at Thr-344, Thr-360, Ser-362 and Ser-370 by CDK1 in prophase and metaphase and dephosphorylated during anaphase. Phosphorylation does not directly affect casein kinase 2 activity, but may contribute to its regulation by forming binding sites for interacting proteins and/or targeting it to different compartments.

Its subcellular location is the nucleus. It catalyses the reaction L-seryl-[protein] + ATP = O-phospho-L-seryl-[protein] + ADP + H(+). The enzyme catalyses L-threonyl-[protein] + ATP = O-phospho-L-threonyl-[protein] + ADP + H(+). Its activity is regulated as follows. Constitutively active protein kinase whose activity is not directly affected by phosphorylation. Seems to be regulated by level of expression and localization. Its function is as follows. Catalytic subunit of a constitutively active serine/threonine-protein kinase complex that phosphorylates a large number of substrates containing acidic residues C-terminal to the phosphorylated serine or threonine. Regulates numerous cellular processes, such as cell cycle progression, apoptosis and transcription, as well as viral infection. May act as a regulatory node which integrates and coordinates numerous signals leading to an appropriate cellular response. During mitosis, functions as a component of the p53/TP53-dependent spindle assembly checkpoint (SAC) that maintains cyclin-B-CDK1 activity and G2 arrest in response to spindle damage. Also required for p53/TP53-mediated apoptosis, phosphorylating 'Ser-392' of p53/TP53 following UV irradiation. Phosphorylates a number of DNA repair proteins in response to DNA damage, such as MDC1, MRE11, RAD9A, RAD51 and HTATSF1, promoting their recruitment to DNA damage sites. Can also negatively regulate apoptosis. Phosphorylates the caspases CASP9 and CASP2 and the apoptotic regulator NOL3. Phosphorylation protects CASP9 from cleavage and activation by CASP8, and inhibits the dimerization of CASP2 and activation of CASP8. Phosphorylates YY1, protecting YY1 from cleavage by CASP7 during apoptosis. Regulates transcription by direct phosphorylation of RNA polymerases I, II, III and IV. Also phosphorylates and regulates numerous transcription factors including NF-kappa-B, STAT1, CREB1, IRF1, IRF2, ATF1, ATF4, SRF, MAX, JUN, FOS, MYC and MYB. Phosphorylates Hsp90 and its co-chaperones FKBP4 and CDC37, which is essential for chaperone function. Mediates sequential phosphorylation of FNIP1, promoting its gradual interaction with Hsp90, leading to activate both kinase and non-kinase client proteins of Hsp90. Regulates Wnt signaling by phosphorylating CTNNB1 and the transcription factor LEF1. Acts as an ectokinase that phosphorylates several extracellular proteins. Phosphorylates PML at 'Ser-565' and primes it for ubiquitin-mediated degradation. Plays an important role in the circadian clock function by phosphorylating BMAL1 at 'Ser-90' which is pivotal for its interaction with CLOCK and which controls CLOCK nuclear entry. Phosphorylates FMR1, promoting FMR1-dependent formation of a membraneless compartment. May phosphorylate histone H2A on 'Ser-1'. The sequence is that of Casein kinase II subunit alpha (CSNK2A1) from Oryctolagus cuniculus (Rabbit).